The sequence spans 201 residues: NAD(P)H quinone oxidoreductase PST2 (201 aa).

The region spanning 6-192 (VAIIIYSLYH…SIAQQQGEDF (187 aa)) is the Flavodoxin-like domain. FMN-binding positions include 12-16 (SLYHH) and 112-164 (VFVS…SPWG).

It belongs to the WrbA family. FMN is required as a cofactor.

The protein localises to the cell membrane. It catalyses the reaction a quinone + NADH + H(+) = a quinol + NAD(+). The catalysed reaction is a quinone + NADPH + H(+) = a quinol + NADP(+). Flavodoxin-like protein (FLP) that plays a role in cell wall integrity, oxidative stress protection and virulence. FLPs act as NAD(P)H quinone oxidoreductases. Reduces ubiquinone (coenzyme Q), enabling it to serve as an antioxidant in the membrane. The protein is NAD(P)H quinone oxidoreductase PST2 of Candida albicans (strain SC5314 / ATCC MYA-2876) (Yeast).